Reading from the N-terminus, the 532-residue chain is Zinc metalloproteinase nas-29 (532 aa).

The signal sequence occupies residues 1-22 (MISKNTSFCGFLILVLATCMSA). Asn5, Asn27, Asn70, and Asn106 each carry an N-linked (GlcNAc...) asparagine glycan. Residues 23 to 134 (QFVSNESIKL…NGESTDRTKR (112 aa)) constitute a propeptide that is removed on maturation. The region spanning 135–335 (QAYLDNNYPA…HIMNQHYQCQ (201 aa)) is the Peptidase M12A domain. Cystine bridges form between Cys179/Cys334, Cys201/Cys222, Cys338/Cys358, Cys360/Cys369, Cys380/Cys408, and Cys435/Cys456. His230 is a Zn(2+) binding site. The active site involves Glu231. 2 residues coordinate Zn(2+): His234 and His240. Residues 330–370 (QHYQCQEKCPTQAPCQNGGFTNSRNCKVCKCPTGFGGAYCQ) form the EGF-like domain. The CUB domain occupies 380–494 (CGGYLNAEET…VSFEYSFVST (115 aa)). Asn503 carries an N-linked (GlcNAc...) asparagine glycan.

Zn(2+) is required as a cofactor.

It localises to the secreted. Functionally, metalloprotease. The sequence is that of Zinc metalloproteinase nas-29 (nas-29) from Caenorhabditis elegans.